Consider the following 361-residue polypeptide: Histidinol-phosphate aminotransferase (361 aa).

N6-(pyridoxal phosphate)lysine is present on lysine 219.

Belongs to the class-II pyridoxal-phosphate-dependent aminotransferase family. Histidinol-phosphate aminotransferase subfamily. Homodimer. Pyridoxal 5'-phosphate is required as a cofactor.

It carries out the reaction L-histidinol phosphate + 2-oxoglutarate = 3-(imidazol-4-yl)-2-oxopropyl phosphate + L-glutamate. Its pathway is amino-acid biosynthesis; L-histidine biosynthesis; L-histidine from 5-phospho-alpha-D-ribose 1-diphosphate: step 7/9. This is Histidinol-phosphate aminotransferase from Acinetobacter baumannii (strain ATCC 17978 / DSM 105126 / CIP 53.77 / LMG 1025 / NCDC KC755 / 5377).